Consider the following 165-residue polypeptide: Small ribosomal subunit protein uS5 (165 aa).

The region spanning 10 to 73 (LVEKLVSVDR…EAAKRNMITV (64 aa)) is the S5 DRBM domain.

The protein belongs to the universal ribosomal protein uS5 family. In terms of assembly, part of the 30S ribosomal subunit. Contacts proteins S4 and S8.

Functionally, with S4 and S12 plays an important role in translational accuracy. Located at the back of the 30S subunit body where it stabilizes the conformation of the head with respect to the body. The protein is Small ribosomal subunit protein uS5 of Psychrobacter sp. (strain PRwf-1).